The sequence spans 365 residues: Alanine racemase (365 aa).

Lysine 32 functions as the Proton acceptor; specific for D-alanine in the catalytic mechanism. Lysine 32 is modified (N6-(pyridoxal phosphate)lysine). Arginine 128 contributes to the substrate binding site. The active-site Proton acceptor; specific for L-alanine is tyrosine 257. Position 305 (methionine 305) interacts with substrate.

Belongs to the alanine racemase family. Pyridoxal 5'-phosphate is required as a cofactor.

The enzyme catalyses L-alanine = D-alanine. It functions in the pathway amino-acid biosynthesis; D-alanine biosynthesis; D-alanine from L-alanine: step 1/1. In terms of biological role, catalyzes the interconversion of L-alanine and D-alanine. May also act on other amino acids. The sequence is that of Alanine racemase (alr) from Francisella tularensis subsp. tularensis (strain SCHU S4 / Schu 4).